A 65-amino-acid polypeptide reads, in one-letter code: Light-harvesting protein B-800-850 alpha chain C (65 aa).

The Cytoplasmic segment spans residues 1–11 (MNQGRIWTVVS). A helical membrane pass occupies residues 12-35 (PTVGLPLLLGSVAAIAFAVHFAVL). Histidine 31 contributes to the a bacteriochlorophyll binding site. Residues 36 to 65 (ENTSWVAAFMNGKSVAAAPAPAAPAAPAKK) are Periplasmic-facing.

The protein belongs to the antenna complex alpha subunit family. As to quaternary structure, the core complex is formed by different alpha and beta chains, binding bacteriochlorophyll molecules, and arranged most probably in tetrameric structures disposed around the reaction center. The non-pigmented gamma chains may constitute additional components.

It is found in the cell inner membrane. Functionally, antenna complexes are light-harvesting systems, which transfer the excitation energy to the reaction centers. In Rhodopseudomonas palustris, this protein is Light-harvesting protein B-800-850 alpha chain C (pucAC).